Reading from the N-terminus, the 276-residue chain is Formamidopyrimidine-DNA glycosylase (276 aa).

Pro2 serves as the catalytic Schiff-base intermediate with DNA. The active-site Proton donor is Glu3. The Proton donor; for beta-elimination activity role is filled by Lys58. DNA contacts are provided by His92, Arg111, and Arg153. An FPG-type zinc finger spans residues 238–272 (TVYGRERQNCLNCSSTIIKTKHSGRSTFYCRTCQY). The Proton donor; for delta-elimination activity role is filled by Arg262.

Belongs to the FPG family. In terms of assembly, monomer. The cofactor is Zn(2+).

It catalyses the reaction Hydrolysis of DNA containing ring-opened 7-methylguanine residues, releasing 2,6-diamino-4-hydroxy-5-(N-methyl)formamidopyrimidine.. It carries out the reaction 2'-deoxyribonucleotide-(2'-deoxyribose 5'-phosphate)-2'-deoxyribonucleotide-DNA = a 3'-end 2'-deoxyribonucleotide-(2,3-dehydro-2,3-deoxyribose 5'-phosphate)-DNA + a 5'-end 5'-phospho-2'-deoxyribonucleoside-DNA + H(+). Involved in base excision repair of DNA damaged by oxidation or by mutagenic agents. Acts as a DNA glycosylase that recognizes and removes damaged bases. Has a preference for oxidized purines, such as 7,8-dihydro-8-oxoguanine (8-oxoG). Has AP (apurinic/apyrimidinic) lyase activity and introduces nicks in the DNA strand. Cleaves the DNA backbone by beta-delta elimination to generate a single-strand break at the site of the removed base with both 3'- and 5'-phosphates. This Rickettsia felis (strain ATCC VR-1525 / URRWXCal2) (Rickettsia azadi) protein is Formamidopyrimidine-DNA glycosylase.